The sequence spans 160 residues: MSKSSRGGRQIVASNRKARHNYSIIEVFEAGVALQGTEVKSLREGQASLADSFATIDDGEVWLRNAHIPEYRHGSWTNHEPRRNRKLLLHRRQIDTLVGKIREGNFALVPLSLYFAEGKVKVELALARGKQARDKRQDMARRDAQREVLRELGRRAKGMT.

Belongs to the SmpB family.

Its subcellular location is the cytoplasm. Its function is as follows. Required for rescue of stalled ribosomes mediated by trans-translation. Binds to transfer-messenger RNA (tmRNA), required for stable association of tmRNA with ribosomes. tmRNA and SmpB together mimic tRNA shape, replacing the anticodon stem-loop with SmpB. tmRNA is encoded by the ssrA gene; the 2 termini fold to resemble tRNA(Ala) and it encodes a 'tag peptide', a short internal open reading frame. During trans-translation Ala-aminoacylated tmRNA acts like a tRNA, entering the A-site of stalled ribosomes, displacing the stalled mRNA. The ribosome then switches to translate the ORF on the tmRNA; the nascent peptide is terminated with the 'tag peptide' encoded by the tmRNA and targeted for degradation. The ribosome is freed to recommence translation, which seems to be the essential function of trans-translation. The sequence is that of SsrA-binding protein from Mycobacterium bovis (strain ATCC BAA-935 / AF2122/97).